The primary structure comprises 319 residues: 7-methylguanosine phosphate-specific 5'-nucleotidase (319 aa).

D55 acts as the Nucleophile in catalysis. 2 residues coordinate Mg(2+): D55 and D57. Residue D57 is the Proton donor of the active site. E103 lines the CMP pocket. Residues E103 and S124 each coordinate N(7)-methyl-GMP. 171-172 lines the substrate pocket; that stretch reads SA. D245 lines the Mg(2+) pocket.

This sequence belongs to the pyrimidine 5'-nucleotidase family. Monomer. Mg(2+) serves as cofactor.

It catalyses the reaction N(7)-methyl-GMP + H2O = N(7)-methylguanosine + phosphate. The catalysed reaction is CMP + H2O = cytidine + phosphate. The enzyme catalyses a ribonucleoside 5'-phosphate + H2O = a ribonucleoside + phosphate. With respect to regulation, inhibited by high levels of AMP. In terms of biological role, specifically hydrolyzes 7-methylguanosine monophosphate (m(7)GMP) to 7-methylguanosine and inorganic phosphate. Also able to mediate hydrolysis of diphosphate (m(7)GDP) to 7-methylguanosine and 2 inorganic phosphate with lower activity. The specific activity for m(7)GMP may protect cells against undesired salvage of m(7)GMP and its incorporation into nucleic acids. Also has weak activity for CMP. UMP and purine nucleotides are poor substrates. The polypeptide is 7-methylguanosine phosphate-specific 5'-nucleotidase (Drosophila melanogaster (Fruit fly)).